A 251-amino-acid polypeptide reads, in one-letter code: Small ribosomal subunit protein uS3 (251 aa).

The 72-residue stretch at 22–93 (LNEFFTRELA…GIAIYAERVE (72 aa)) folds into the KH type-2 domain. A disordered region spans residues 223-251 (TVKSYKQTAEDETETDAPVEAEAEVEATA). Residues 232 to 251 (EDETETDAPVEAEAEVEATA) are compositionally biased toward acidic residues.

This sequence belongs to the universal ribosomal protein uS3 family. In terms of assembly, component of the small ribosomal subunit. Mature ribosomes consist of a small (40S) and a large (60S) subunit. The 40S subunit contains about 32 different proteins and 1 molecule of RNA (18S). The 60S subunit contains 45 different proteins and 3 molecules of RNA (25S, 5.8S and 5S).

It localises to the cytoplasm. Its function is as follows. Component of the ribosome, a large ribonucleoprotein complex responsible for the synthesis of proteins in the cell. The small ribosomal subunit (SSU) binds messenger RNAs (mRNAs) and translates the encoded message by selecting cognate aminoacyl-transfer RNA (tRNA) molecules. The large subunit (LSU) contains the ribosomal catalytic site termed the peptidyl transferase center (PTC), which catalyzes the formation of peptide bonds, thereby polymerizing the amino acids delivered by tRNAs into a polypeptide chain. The nascent polypeptides leave the ribosome through a tunnel in the LSU and interact with protein factors that function in enzymatic processing, targeting, and the membrane insertion of nascent chains at the exit of the ribosomal tunnel. The sequence is that of Small ribosomal subunit protein uS3 (RPS3) from Candida albicans (strain SC5314 / ATCC MYA-2876) (Yeast).